The sequence spans 186 residues: Pyridoxal 5'-phosphate synthase subunit PdxT (186 aa).

An L-glutamine-binding site is contributed by 46 to 48 (GES). Cysteine 75 acts as the Nucleophile in catalysis. Residues arginine 101 and 128-129 (IR) contribute to the L-glutamine site. Catalysis depends on charge relay system residues histidine 165 and glutamate 167.

This sequence belongs to the glutaminase PdxT/SNO family. As to quaternary structure, in the presence of PdxS, forms a dodecamer of heterodimers. Only shows activity in the heterodimer.

It carries out the reaction aldehydo-D-ribose 5-phosphate + D-glyceraldehyde 3-phosphate + L-glutamine = pyridoxal 5'-phosphate + L-glutamate + phosphate + 3 H2O + H(+). The enzyme catalyses L-glutamine + H2O = L-glutamate + NH4(+). The protein operates within cofactor biosynthesis; pyridoxal 5'-phosphate biosynthesis. Its function is as follows. Catalyzes the hydrolysis of glutamine to glutamate and ammonia as part of the biosynthesis of pyridoxal 5'-phosphate. The resulting ammonia molecule is channeled to the active site of PdxS. This chain is Pyridoxal 5'-phosphate synthase subunit PdxT, found in Methanocaldococcus jannaschii (strain ATCC 43067 / DSM 2661 / JAL-1 / JCM 10045 / NBRC 100440) (Methanococcus jannaschii).